A 135-amino-acid polypeptide reads, in one-letter code: Mediator of RNA polymerase II transcription subunit 10 (135 aa).

This sequence belongs to the Mediator complex subunit 10 family. In terms of assembly, component of the Mediator complex.

The protein resides in the nucleus. Component of the Mediator complex, a coactivator involved in the regulated transcription of nearly all RNA polymerase II-dependent genes. Mediator functions as a bridge to convey information from gene-specific regulatory proteins to the basal RNA polymerase II transcription machinery. Mediator is recruited to promoters by direct interactions with regulatory proteins and serves as a scaffold for the assembly of a functional preinitiation complex with RNA polymerase II and the general transcription factors. This Xenopus laevis (African clawed frog) protein is Mediator of RNA polymerase II transcription subunit 10 (med10).